The sequence spans 126 residues: Phosphoribosyl-AMP cyclohydrolase (126 aa).

Asp74 provides a ligand contact to Mg(2+). Cys75 contacts Zn(2+). The Mg(2+) site is built by Asp76 and Asp78. Residues Cys92 and Cys99 each coordinate Zn(2+).

The protein belongs to the PRA-CH family. Homodimer. The cofactor is Mg(2+). Zn(2+) is required as a cofactor.

The protein resides in the cytoplasm. It carries out the reaction 1-(5-phospho-beta-D-ribosyl)-5'-AMP + H2O = 1-(5-phospho-beta-D-ribosyl)-5-[(5-phospho-beta-D-ribosylamino)methylideneamino]imidazole-4-carboxamide. Its pathway is amino-acid biosynthesis; L-histidine biosynthesis; L-histidine from 5-phospho-alpha-D-ribose 1-diphosphate: step 3/9. Its function is as follows. Catalyzes the hydrolysis of the adenine ring of phosphoribosyl-AMP. In Geotalea daltonii (strain DSM 22248 / JCM 15807 / FRC-32) (Geobacter daltonii), this protein is Phosphoribosyl-AMP cyclohydrolase.